Reading from the N-terminus, the 413-residue chain is 2,3-diketo-5-methylthiopentyl-1-phosphate enolase (413 aa).

Lys-98 acts as the Proton acceptor in catalysis. Substrate-binding positions include Lys-147, 173–176 (KDDE), His-264, Gly-337, and 359–360 (GG). Lys-173, Asp-175, and Glu-176 together coordinate Mg(2+). Lys-173 carries the N6-carboxylysine modification.

This sequence belongs to the RuBisCO large chain family. Type IV subfamily. As to quaternary structure, homodimer. Mg(2+) serves as cofactor.

It catalyses the reaction 5-methylsulfanyl-2,3-dioxopentyl phosphate = 2-hydroxy-5-methylsulfanyl-3-oxopent-1-enyl phosphate. It functions in the pathway amino-acid biosynthesis; L-methionine biosynthesis via salvage pathway; L-methionine from S-methyl-5-thio-alpha-D-ribose 1-phosphate: step 3/6. Functionally, catalyzes the enolization of 2,3-diketo-5-methylthiopentyl-1-phosphate (DK-MTP-1-P) into 2-hydroxy-3-keto-5-methylthiopentenyl-1-phosphate (HK-MTPenyl-1-P). This is 2,3-diketo-5-methylthiopentyl-1-phosphate enolase from Geobacillus thermodenitrificans (strain NG80-2).